We begin with the raw amino-acid sequence, 763 residues long: Ethylene receptor 2 (763 aa).

3 helical membrane passes run 58 to 78 (FLIA…ATCS), 86 to 106 (IVLQ…ITMF), and 115 to 135 (VVLA…ATAI). Cys-97 and His-101 together coordinate Cu cation. The GAF domain maps to 190 to 339 (DRHTILYTTM…VVADQVAVAL (150 aa)). A Histidine kinase domain is found at 382–615 (AMYDGMRRPM…TIMLALQFQL (234 aa)). Positions 641-760 (QVILVDSDDT…ALGDELYRVL (120 aa)) constitute a Response regulatory domain. Asp-692 carries the 4-aspartylphosphate modification.

This sequence belongs to the ethylene receptor family. The cofactor is Cu cation. Post-translationally, autophosphorylated on serine, threonine and tyrosine residues.

Its subcellular location is the endoplasmic reticulum membrane. It carries out the reaction ATP + protein L-histidine = ADP + protein N-phospho-L-histidine.. In terms of biological role, ethylene receptor related to bacterial two-component regulators. Acts as a negative regulator of ethylene signaling. May delay the transition from the vegetative stage to the floral stage by up-regulating GI (GIGANTEA) and RCN1 and cause starch accumulation in stems by down-regulating the alpha-amylase AMY3D. The chain is Ethylene receptor 2 from Oryza sativa subsp. japonica (Rice).